The sequence spans 348 residues: Dihydroorotase (348 aa).

Residues His17 and His19 each coordinate Zn(2+). Substrate is bound by residues 19 to 21 and Asn45; that span reads HLR. Zn(2+)-binding residues include Lys103, His140, and His178. At Lys103 the chain carries N6-carboxylysine. Position 140 (His140) interacts with substrate. Substrate is bound at residue Leu223. Asp251 is a binding site for Zn(2+). The active site involves Asp251. Positions 255 and 267 each coordinate substrate.

It belongs to the metallo-dependent hydrolases superfamily. DHOase family. Class II DHOase subfamily. In terms of assembly, homodimer. Zn(2+) serves as cofactor.

It catalyses the reaction (S)-dihydroorotate + H2O = N-carbamoyl-L-aspartate + H(+). It functions in the pathway pyrimidine metabolism; UMP biosynthesis via de novo pathway; (S)-dihydroorotate from bicarbonate: step 3/3. Functionally, catalyzes the reversible cyclization of carbamoyl aspartate to dihydroorotate. The polypeptide is Dihydroorotase (Yersinia enterocolitica serotype O:8 / biotype 1B (strain NCTC 13174 / 8081)).